The sequence spans 189 residues: Accessory gene regulator protein B (189 aa).

Transmembrane regions (helical) follow at residues 50-70, 83-103, 105-125, 143-163, and 164-184; these read VSLL…FFFI, LLCY…VGYV, VSSL…SIYA, KIKA…LNEP, and YQQL…PIFF.

This sequence belongs to the AgrB family.

The protein resides in the cell membrane. Functionally, essential for the production of a quorum sensing system signal molecule, the autoinducing peptide (AIP). This quorum sensing system is responsible for the regulation of the expression of virulence factor genes. Involved in the proteolytic processing of AgrD, the precursor of AIP. This Staphylococcus saprophyticus subsp. saprophyticus (strain ATCC 15305 / DSM 20229 / NCIMB 8711 / NCTC 7292 / S-41) protein is Accessory gene regulator protein B.